Here is a 92-residue protein sequence, read N- to C-terminus: MASKSGKTGSSGRFGARYGRVSRRRVAEIESEMNEDHACPNCGEDRVDRQGTGIWQCSYCDYKFTGGSYKPETPGGKTVRRSIRAALSEDEE.

Residues Cys39, Cys42, Cys57, and Cys60 each coordinate Zn(2+). The C4-type zinc finger occupies 39-60 (CPNCGEDRVDRQGTGIWQCSYC).

It belongs to the eukaryotic ribosomal protein eL43 family. Putative zinc-binding subfamily. Part of the 50S ribosomal subunit. Contacts protein L2. It depends on Zn(2+) as a cofactor.

Binds to the 23S rRNA. This chain is Large ribosomal subunit protein eL43, found in Haloarcula marismortui (strain ATCC 43049 / DSM 3752 / JCM 8966 / VKM B-1809) (Halobacterium marismortui).